The chain runs to 154 residues: Large ribosomal subunit protein uL13 (154 aa).

This sequence belongs to the universal ribosomal protein uL13 family. In terms of assembly, part of the 50S ribosomal subunit.

This protein is one of the early assembly proteins of the 50S ribosomal subunit, although it is not seen to bind rRNA by itself. It is important during the early stages of 50S assembly. This Rhizobium meliloti (strain 1021) (Ensifer meliloti) protein is Large ribosomal subunit protein uL13.